A 473-amino-acid polypeptide reads, in one-letter code: ATP synthase subunit beta (473 aa).

Residue 158–165 (GGAGVGKT) coordinates ATP.

The protein belongs to the ATPase alpha/beta chains family. F-type ATPases have 2 components, CF(1) - the catalytic core - and CF(0) - the membrane proton channel. CF(1) has five subunits: alpha(3), beta(3), gamma(1), delta(1), epsilon(1). CF(0) has three main subunits: a(1), b(2) and c(9-12). The alpha and beta chains form an alternating ring which encloses part of the gamma chain. CF(1) is attached to CF(0) by a central stalk formed by the gamma and epsilon chains, while a peripheral stalk is formed by the delta and b chains.

The protein resides in the cell membrane. It carries out the reaction ATP + H2O + 4 H(+)(in) = ADP + phosphate + 5 H(+)(out). Functionally, produces ATP from ADP in the presence of a proton gradient across the membrane. The catalytic sites are hosted primarily by the beta subunits. This Geobacillus kaustophilus (strain HTA426) protein is ATP synthase subunit beta.